We begin with the raw amino-acid sequence, 190 residues long: Peptidyl-tRNA hydrolase (190 aa).

TRNA is bound at residue Tyr-17. The active-site Proton acceptor is the His-22. TRNA-binding residues include Tyr-67 and Asn-69.

It belongs to the PTH family. In terms of assembly, monomer.

The protein localises to the cytoplasm. The catalysed reaction is an N-acyl-L-alpha-aminoacyl-tRNA + H2O = an N-acyl-L-amino acid + a tRNA + H(+). Functionally, hydrolyzes ribosome-free peptidyl-tRNAs (with 1 or more amino acids incorporated), which drop off the ribosome during protein synthesis, or as a result of ribosome stalling. Catalyzes the release of premature peptidyl moieties from peptidyl-tRNA molecules trapped in stalled 50S ribosomal subunits, and thus maintains levels of free tRNAs and 50S ribosomes. The sequence is that of Peptidyl-tRNA hydrolase from Moorella thermoacetica (strain ATCC 39073 / JCM 9320).